The following is a 91-amino-acid chain: Small ribosomal subunit protein uS19 (91 aa).

Belongs to the universal ribosomal protein uS19 family.

Functionally, protein S19 forms a complex with S13 that binds strongly to the 16S ribosomal RNA. This chain is Small ribosomal subunit protein uS19, found in Azoarcus sp. (strain BH72).